The primary structure comprises 477 residues: UDP-N-acetylmuramate--L-alanine ligase (477 aa).

122–128 (GTHGKTT) lines the ATP pocket.

It belongs to the MurCDEF family.

The protein resides in the cytoplasm. It catalyses the reaction UDP-N-acetyl-alpha-D-muramate + L-alanine + ATP = UDP-N-acetyl-alpha-D-muramoyl-L-alanine + ADP + phosphate + H(+). It participates in cell wall biogenesis; peptidoglycan biosynthesis. Its function is as follows. Cell wall formation. This is UDP-N-acetylmuramate--L-alanine ligase from Xanthomonas axonopodis pv. citri (strain 306).